The following is a 382-amino-acid chain: uncharacterized protein (382 aa).

The next 11 helical transmembrane spans lie at 8 to 28 (VLLL…LNTL), 41 to 61 (WQVG…TLIA), 73 to 93 (SYHC…LTVD), 94 to 114 (FWSW…IWVI), 133 to 153 (AAYM…LGIV), 157 to 177 (LLSV…PLLF), 208 to 228 (GCII…LYLS), 235 to 255 (ASVG…QWPM), 274 to 294 (VVIL…ALFI), 325 to 345 (ALLM…SLLM), and 349 to 369 (SDNL…MMLL).

It belongs to the major facilitator superfamily. YcaD (TC 2.A.1.26) family.

It localises to the cell inner membrane. This is an uncharacterized protein from Yersinia pseudotuberculosis serotype IB (strain PB1/+).